The primary structure comprises 581 residues: MYRLLGPLACLALAWFFTWAPSGRCRCRPWETCWPSVADWSALNESMQGNLIRIRPVASVCHGSEYEAAACANVSNMVVDSGWRASNPRTLQDWIWETGNTAQESCFDTTWPGYHHRTSDCHQGRIPLYSAIVESTSDIQSCVKFANHHNLRLVIKNSGHDTAGRSSAPHSFQISTSSLKTISLHENFVPRGSTTGHGPAVTLGAGVMQWEVYAHGVKNAYTILGGECPTVGAVGAFLQGGGVSSIKSFTKGLAVDNVLEFQVVTSNADLVTANENENQDLFWALRGGGGGTFGFVAQATIRVFPDDPVTVATTTIKAAVTNTMFWTEGVRELFRLVQHFNDMHIPGQLVMTRPTTDSMQATLELHFANTTDEAHVTRLLNSQLRPLTLHHISTSTLVRVQERESSELRTKPDIYPPHYGIVAGSVLISAATLRKAQGQSHVASKLSQLPLGSNDIMFTSNLGGRVFENSAIDISLHPAWREAAHLITLVRAVEPTIEDRDSQVSYRNLGDPQEKEFRDRYWGTANYARLAAIKAKWDPHELFMSKLGVGSENWDEEGICRKSLGFVERLSAILKLERWKN.

The signal sequence occupies residues 1 to 25 (MYRLLGPLACLALAWFFTWAPSGRC). Residues Asn44 and Asn73 are each glycosylated (N-linked (GlcNAc...) asparagine). The FAD-binding PCMH-type domain occupies 122–306 (HQGRIPLYSA…AQATIRVFPD (185 aa)). Asn369 carries an N-linked (GlcNAc...) asparagine glycan.

Belongs to the oxygen-dependent FAD-linked oxidoreductase family. FAD serves as cofactor.

Its pathway is alkaloid biosynthesis; ergot alkaloid biosynthesis. FAD-linked oxidoreductase; part of the gene cluster that mediates the biosynthesis of fungal ergot alkaloid. DmaW catalyzes the first step of ergot alkaloid biosynthesis by condensing dimethylallyl diphosphate (DMAP) and tryptophan to form 4-dimethylallyl-L-tryptophan. The second step is catalyzed by the methyltransferase easF that methylates 4-dimethylallyl-L-tryptophan in the presence of S-adenosyl-L-methionine, resulting in the formation of 4-dimethylallyl-L-abrine. The catalase easC and the FAD-dependent oxidoreductase easE then transform 4-dimethylallyl-L-abrine to chanoclavine-I which is further oxidized by easD in the presence of NAD(+), resulting in the formation of chanoclavine-I aldehyde. Agroclavine dehydrogenase easG then mediates the conversion of chanoclavine-I aldehyde to agroclavine via a non-enzymatic adduct reaction: the substrate is an iminium intermediate that is formed spontaneously from chanoclavine-I aldehyde in the presence of glutathione. Further conversion of agroclavine to paspalic acid is a two-step process involving oxidation of agroclavine to elymoclavine and of elymoclavine to paspalic acid, the second step being performed by the elymoclavine oxidase cloA. However, cloA does not encode a functional enzyme indicating that C.fusiformis terminates its ergot alkaloid pathway at elymoclavine. This is FAD-linked oxidoreductase easE from Claviceps fusiformis (Ergot fungus).